The sequence spans 277 residues: Digeranylgeranylglyceryl phosphate synthase (277 aa).

7 helical membrane-spanning segments follow: residues 16–36 (ILAG…IPSI), 40–60 (GLVF…NDYF), 101–121 (FLGV…FIYA), 129–149 (FIGN…GALG), 153–173 (VGLA…REIM), 205–225 (IFGV…IGLG), and 257–277 (LKIA…TKGV).

This sequence belongs to the UbiA prenyltransferase family. DGGGP synthase subfamily. It depends on Mg(2+) as a cofactor.

Its subcellular location is the cell membrane. It carries out the reaction sn-3-O-(geranylgeranyl)glycerol 1-phosphate + (2E,6E,10E)-geranylgeranyl diphosphate = 2,3-bis-O-(geranylgeranyl)-sn-glycerol 1-phosphate + diphosphate. Its pathway is membrane lipid metabolism; glycerophospholipid metabolism. In terms of biological role, prenyltransferase that catalyzes the transfer of the geranylgeranyl moiety of geranylgeranyl diphosphate (GGPP) to the C2 hydroxyl of (S)-3-O-geranylgeranylglyceryl phosphate (GGGP). This reaction is the second ether-bond-formation step in the biosynthesis of archaeal membrane lipids. The protein is Digeranylgeranylglyceryl phosphate synthase of Pyrococcus abyssi (strain GE5 / Orsay).